We begin with the raw amino-acid sequence, 455 residues long: UDP-N-acetylmuramoylalanine--D-glutamate ligase (455 aa).

Residue 118-124 participates in ATP binding; the sequence is GSNAKST.

The protein belongs to the MurCDEF family.

The protein resides in the cytoplasm. The enzyme catalyses UDP-N-acetyl-alpha-D-muramoyl-L-alanine + D-glutamate + ATP = UDP-N-acetyl-alpha-D-muramoyl-L-alanyl-D-glutamate + ADP + phosphate + H(+). The protein operates within cell wall biogenesis; peptidoglycan biosynthesis. In terms of biological role, cell wall formation. Catalyzes the addition of glutamate to the nucleotide precursor UDP-N-acetylmuramoyl-L-alanine (UMA). The chain is UDP-N-acetylmuramoylalanine--D-glutamate ligase from Chromohalobacter salexigens (strain ATCC BAA-138 / DSM 3043 / CIP 106854 / NCIMB 13768 / 1H11).